We begin with the raw amino-acid sequence, 183 residues long: Peptide deformylase (183 aa).

Cysteine 110 and histidine 153 together coordinate Fe cation. The active site involves glutamate 154. A Fe cation-binding site is contributed by histidine 157.

It belongs to the polypeptide deformylase family. It depends on Fe(2+) as a cofactor.

The enzyme catalyses N-terminal N-formyl-L-methionyl-[peptide] + H2O = N-terminal L-methionyl-[peptide] + formate. Removes the formyl group from the N-terminal Met of newly synthesized proteins. Requires at least a dipeptide for an efficient rate of reaction. N-terminal L-methionine is a prerequisite for activity but the enzyme has broad specificity at other positions. In Shouchella clausii (strain KSM-K16) (Alkalihalobacillus clausii), this protein is Peptide deformylase.